The primary structure comprises 68 residues: Coiled-coil domain-containing protein 179 (68 aa).

The interval 11-68 (SQVNPEGPRQHHPSEVTERQLANKRIQNMQHLKKEKRRLNKRFSRPSPIPEPGLLWSS) is disordered. The span at 18-28 (PRQHHPSEVTE) shows a compositional bias: basic and acidic residues. A coiled-coil region spans residues 27–53 (TERQLANKRIQNMQHLKKEKRRLNKRF). The span at 41–54 (HLKKEKRRLNKRFS) shows a compositional bias: basic residues.

This Homo sapiens (Human) protein is Coiled-coil domain-containing protein 179 (CCDC179).